Here is a 668-residue protein sequence, read N- to C-terminus: Pentatricopeptide repeat-containing protein CRP1, chloroplastic (668 aa).

Residues 1–64 (MPASLLPPTF…SASLTSPSPP (64 aa)) constitute a chloroplast transit peptide. 14 PPR repeats span residues 154–188 (SPLLLNSLLAASAAASRPAVALRLLSLLREHDFLP), 189–226 (DLASYSHLLASLLNTRDPPDAALLERLLGDLRESRLEP), 227–261 (DAPLFSDLISAFARAALPDAALELLASAQAIGLTP), 262–297 (RSNAVTALISALGTAGRVAEAEALFLEFFLAGEIKP), 298–332 (RTRAYNALLKGYVRIASLKNAEQVLDEMSQCGVAP), 333–367 (DEATYSLLVDAYTRAGRWESARILLKEMEADGVKP), 368–402 (SSYVFSRILAGFRDRGDWQKAFAVLREMQASGVRP), 403–437 (DRHFYNVMIDTFGKYNCLGHAMDAFNKMREEGIEP), 438–472 (DVVTWNTLIDAHCKGGRHDRAAELFEEMRESNCPP), 473–507 (GTTTYNIMINLLGEQEHWEGVEAMLSEMKEQGLVP), 508–542 (NIITYTTLVDVYGRSGRYKEAIDCIEAMKADGLKP), 543–577 (SPTMYHALVNAYAQRGLADHALNVVKAMKADGLEV), 578–612 (SILVLNSLINAFGEDRRVVEAFSVLQFMRENGLRP), and 613–647 (DVITYTTLMKALIRVEQFDKVPVIYEEMITSGCAP).

This sequence belongs to the PPR family. P subfamily. Component of a multisubunit complex.

Its subcellular location is the plastid. It is found in the chloroplast stroma. Required for the translation of the chloroplast petA and petD mRNAs. Required for the processing of the petD mRNA from a polycistronic precursor. Binds with high affinity to the 5'-UTR of the chloroplastic petA transcript. Activates psaC and petA translation by binding their 5'-UTRs. The sequence is that of Pentatricopeptide repeat-containing protein CRP1, chloroplastic from Zea mays (Maize).